A 342-amino-acid chain; its full sequence is tRNA(Ile)-lysidine synthase (342 aa).

Residue 31-36 (SGGQDS) participates in ATP binding.

It belongs to the tRNA(Ile)-lysidine synthase family.

It localises to the cytoplasm. The enzyme catalyses cytidine(34) in tRNA(Ile2) + L-lysine + ATP = lysidine(34) in tRNA(Ile2) + AMP + diphosphate + H(+). Ligates lysine onto the cytidine present at position 34 of the AUA codon-specific tRNA(Ile) that contains the anticodon CAU, in an ATP-dependent manner. Cytidine is converted to lysidine, thus changing the amino acid specificity of the tRNA from methionine to isoleucine. The sequence is that of tRNA(Ile)-lysidine synthase from Nostoc sp. (strain PCC 7120 / SAG 25.82 / UTEX 2576).